Reading from the N-terminus, the 486-residue chain is N-succinylglutamate 5-semialdehyde dehydrogenase (486 aa).

220–225 contacts NAD(+); sequence GSSRTG. Catalysis depends on residues Glu243 and Cys277.

Belongs to the aldehyde dehydrogenase family. AstD subfamily.

It carries out the reaction N-succinyl-L-glutamate 5-semialdehyde + NAD(+) + H2O = N-succinyl-L-glutamate + NADH + 2 H(+). Its pathway is amino-acid degradation; L-arginine degradation via AST pathway; L-glutamate and succinate from L-arginine: step 4/5. Functionally, catalyzes the NAD-dependent reduction of succinylglutamate semialdehyde into succinylglutamate. The chain is N-succinylglutamate 5-semialdehyde dehydrogenase from Shewanella baltica (strain OS155 / ATCC BAA-1091).